The chain runs to 618 residues: 1-deoxy-D-xylulose-5-phosphate synthase (618 aa).

Thiamine diphosphate contacts are provided by residues His-77 and 118–120 (GHS). Residue Asp-149 coordinates Mg(2+). Thiamine diphosphate-binding positions include 150 to 151 (GA), Asn-178, Tyr-285, and Glu-367. Asn-178 contacts Mg(2+).

It belongs to the transketolase family. DXPS subfamily. As to quaternary structure, homodimer. The cofactor is Mg(2+). Thiamine diphosphate is required as a cofactor.

The catalysed reaction is D-glyceraldehyde 3-phosphate + pyruvate + H(+) = 1-deoxy-D-xylulose 5-phosphate + CO2. The protein operates within metabolic intermediate biosynthesis; 1-deoxy-D-xylulose 5-phosphate biosynthesis; 1-deoxy-D-xylulose 5-phosphate from D-glyceraldehyde 3-phosphate and pyruvate: step 1/1. Catalyzes the acyloin condensation reaction between C atoms 2 and 3 of pyruvate and glyceraldehyde 3-phosphate to yield 1-deoxy-D-xylulose-5-phosphate (DXP). In Idiomarina loihiensis (strain ATCC BAA-735 / DSM 15497 / L2-TR), this protein is 1-deoxy-D-xylulose-5-phosphate synthase.